The sequence spans 92 residues: Defensin (92 aa).

A signal peptide spans 1 to 20; sequence MKFFVLVAIAFALLACVAQA. Residues 21–52 constitute a propeptide that is removed on maturation; it reads QPVSDVDPIPEDHVLVHEDAHQEVLQHSRQKR. 3 disulfide bridges follow: C55–C82, C68–C88, and C72–C90.

This sequence belongs to the invertebrate defensin family. Type 1 subfamily. As to expression, hemolymph (at protein level).

The protein localises to the secreted. In terms of biological role, responsible for the anti Gram-positive activity of immune hemolymph. Expressed in the absence of immune challenge during metamorphosis. The protein is Defensin (Def) of Drosophila melanogaster (Fruit fly).